The sequence spans 228 residues: Prolactin (228 aa).

Positions 1 to 29 (MGTKRSSLKGSLLLLLLMSSLFLFKSVES) are cleaved as a signal peptide. Residues Cys33 and Cys40 are joined by a disulfide bond. A phosphoserine mark is found at Ser55, Ser63, and Ser119. 2 disulfides stabilise this stretch: Cys87–Cys203 and Cys220–Cys228.

Belongs to the somatotropin/prolactin family. As to quaternary structure, interacts with PRLR.

It localises to the secreted. In terms of biological role, prolactin acts primarily on the mammary gland by promoting lactation, mammogenesis, mitogenesis and osmoregulation. This chain is Prolactin (PRL), found in Trichosurus vulpecula (Brush-tailed possum).